A 254-amino-acid chain; its full sequence is Ubiquinone/menaquinone biosynthesis C-methyltransferase UbiE (254 aa).

Residues Thr-77, Asp-98, 126 to 127 (NA), and Ser-143 each bind S-adenosyl-L-methionine.

The protein belongs to the class I-like SAM-binding methyltransferase superfamily. MenG/UbiE family.

It catalyses the reaction a 2-demethylmenaquinol + S-adenosyl-L-methionine = a menaquinol + S-adenosyl-L-homocysteine + H(+). It carries out the reaction a 2-methoxy-6-(all-trans-polyprenyl)benzene-1,4-diol + S-adenosyl-L-methionine = a 5-methoxy-2-methyl-3-(all-trans-polyprenyl)benzene-1,4-diol + S-adenosyl-L-homocysteine + H(+). It participates in quinol/quinone metabolism; menaquinone biosynthesis; menaquinol from 1,4-dihydroxy-2-naphthoate: step 2/2. The protein operates within cofactor biosynthesis; ubiquinone biosynthesis. In terms of biological role, methyltransferase required for the conversion of demethylmenaquinol (DMKH2) to menaquinol (MKH2) and the conversion of 2-polyprenyl-6-methoxy-1,4-benzoquinol (DDMQH2) to 2-polyprenyl-3-methyl-6-methoxy-1,4-benzoquinol (DMQH2). This Blochmanniella floridana protein is Ubiquinone/menaquinone biosynthesis C-methyltransferase UbiE.